The following is a 1171-amino-acid chain: ATP-dependent helicase/deoxyribonuclease subunit B (1171 aa).

The region spanning 1-390 (MSLRFVIGRA…HPLVECIRSA (390 aa)) is the UvrD-like helicase ATP-binding domain. Position 8–15 (8–15 (GRAGSGKS)) interacts with ATP. Positions 281–587 (MEQPRFHSPA…QFANIPPSLD (307 aa)) constitute a UvrD-like helicase C-terminal domain. Cys805, Cys1129, Cys1132, and Cys1138 together coordinate [4Fe-4S] cluster.

This sequence belongs to the helicase family. AddB/RexB type 1 subfamily. Heterodimer of AddA and AddB. Mg(2+) serves as cofactor. [4Fe-4S] cluster is required as a cofactor.

The heterodimer acts as both an ATP-dependent DNA helicase and an ATP-dependent, dual-direction single-stranded exonuclease. Recognizes the chi site generating a DNA molecule suitable for the initiation of homologous recombination. The AddB subunit has 5' -&gt; 3' nuclease activity but not helicase activity. This Bacillus cereus (strain B4264) protein is ATP-dependent helicase/deoxyribonuclease subunit B.